We begin with the raw amino-acid sequence, 292 residues long: Alpha-soluble NSF attachment protein (292 aa).

The protein belongs to the SNAP family.

The protein localises to the cytoplasmic vesicle. It localises to the membrane. Required for vesicular transport between the endoplasmic reticulum and the Golgi apparatus. Also between the endosome and phagosome. In Drosophila melanogaster (Fruit fly), this protein is Alpha-soluble NSF attachment protein.